We begin with the raw amino-acid sequence, 101 residues long: MMLEHILVLSAYLFSIGIYGLITSRNMVRALMCLELILNAVNINFVTFSDFFDSRQLKGNIFSIFVIAIAAAEAAIGSAIVSSIYRNRKSTRINQSTLLNK.

3 helical membrane passes run 2-22, 32-52, and 61-81; these read MLEHILVLSAYLFSIGIYGLI, MCLELILNAVNINFVTFSDFF, and IFSIFVIAIAAAEAAIGSAIV.

It belongs to the complex I subunit 4L family. As to quaternary structure, NDH is composed of at least 16 different subunits, 5 of which are encoded in the nucleus.

The protein resides in the plastid. It localises to the chloroplast thylakoid membrane. It catalyses the reaction a plastoquinone + NADH + (n+1) H(+)(in) = a plastoquinol + NAD(+) + n H(+)(out). It carries out the reaction a plastoquinone + NADPH + (n+1) H(+)(in) = a plastoquinol + NADP(+) + n H(+)(out). In terms of biological role, NDH shuttles electrons from NAD(P)H:plastoquinone, via FMN and iron-sulfur (Fe-S) centers, to quinones in the photosynthetic chain and possibly in a chloroplast respiratory chain. The immediate electron acceptor for the enzyme in this species is believed to be plastoquinone. Couples the redox reaction to proton translocation, and thus conserves the redox energy in a proton gradient. This chain is NAD(P)H-quinone oxidoreductase subunit 4L, chloroplastic, found in Gossypium hirsutum (Upland cotton).